Consider the following 308-residue polypeptide: Probable serine/threonine-protein kinase KIN28 homolog (308 aa).

In terms of domain architecture, Protein kinase spans 4–294; it reads YIRERRLGEG…CDDAIKHPYF (291 aa). Residues 10–18 and lysine 46 contribute to the ATP site; that span reads LGEGTYAVI. Residue aspartate 139 is the Proton acceptor of the active site.

It belongs to the protein kinase superfamily. CMGC Ser/Thr protein kinase family. CDC2/CDKX subfamily. Component of the TFIIH holo complex.

It is found in the nucleus. It carries out the reaction [DNA-directed RNA polymerase] + ATP = phospho-[DNA-directed RNA polymerase] + ADP + H(+). Protein kinase component of transcription factor IIH (TFIIH) which phosphorylates the C-terminal domain of RNA polymerase II during transition from transcription to elongation after preinitiation complex (PIC) formation, thereby positively regulating transcription. Essential for both basal and activated transcription, and is involved in nucleotide excision repair (NER) of damaged DNA. This is Probable serine/threonine-protein kinase KIN28 homolog (KIN28) from Encephalitozoon cuniculi (strain GB-M1) (Microsporidian parasite).